The primary structure comprises 362 residues: MNQVYNFSSGPAMLPVEVLRRAEQELCNWHGIGTSIMEISHRGKEFIAVAKEAENDLRDLLSVPENYKVLFCHGGARGQFAAIPMNLLGDKVKADYIDGGYWAACAVKEAKKYCTPNVINIKTEINGLKSVKPMREWSLSDDAAYVHYCPNETIDGIAIHEQPDFSDNKIIIADYSSSILSGPLDVSRYGMIYAGAQKNIGPAGITLVIVREDLLGKARKETPSIFDYAVLAENDSMFNTPPTFAWYLSGLVFKWLKEQGGVQEMAKRNRAKAELLYDVIDKSDFYRNQVAPENRSLMNVPFQMVDASLDSKFLAEADAQGLQALKGHRVSGGMRASIYNAMSIEGVQALVDFMADFERRNG.

L-glutamate contacts are provided by Ser9 and Arg42. Pyridoxal 5'-phosphate-binding positions include 76-77, Trp102, Thr153, Asp174, and Gln197; that span reads AR. The residue at position 198 (Lys198) is an N6-(pyridoxal phosphate)lysine. 239-240 is a pyridoxal 5'-phosphate binding site; sequence NT.

The protein belongs to the class-V pyridoxal-phosphate-dependent aminotransferase family. SerC subfamily. In terms of assembly, homodimer. Pyridoxal 5'-phosphate serves as cofactor.

The protein localises to the cytoplasm. It carries out the reaction O-phospho-L-serine + 2-oxoglutarate = 3-phosphooxypyruvate + L-glutamate. The catalysed reaction is 4-(phosphooxy)-L-threonine + 2-oxoglutarate = (R)-3-hydroxy-2-oxo-4-phosphooxybutanoate + L-glutamate. The protein operates within amino-acid biosynthesis; L-serine biosynthesis; L-serine from 3-phospho-D-glycerate: step 2/3. It participates in cofactor biosynthesis; pyridoxine 5'-phosphate biosynthesis; pyridoxine 5'-phosphate from D-erythrose 4-phosphate: step 3/5. Its function is as follows. Catalyzes the reversible conversion of 3-phosphohydroxypyruvate to phosphoserine and of 3-hydroxy-2-oxo-4-phosphonooxybutanoate to phosphohydroxythreonine. The polypeptide is Phosphoserine aminotransferase (Photorhabdus laumondii subsp. laumondii (strain DSM 15139 / CIP 105565 / TT01) (Photorhabdus luminescens subsp. laumondii)).